We begin with the raw amino-acid sequence, 203 residues long: NADH-quinone oxidoreductase subunit C (203 aa).

This sequence belongs to the complex I 30 kDa subunit family. NDH-1 is composed of 14 different subunits. Subunits NuoB, C, D, E, F, and G constitute the peripheral sector of the complex.

It is found in the cell inner membrane. It carries out the reaction a quinone + NADH + 5 H(+)(in) = a quinol + NAD(+) + 4 H(+)(out). Its function is as follows. NDH-1 shuttles electrons from NADH, via FMN and iron-sulfur (Fe-S) centers, to quinones in the respiratory chain. The immediate electron acceptor for the enzyme in this species is believed to be ubiquinone. Couples the redox reaction to proton translocation (for every two electrons transferred, four hydrogen ions are translocated across the cytoplasmic membrane), and thus conserves the redox energy in a proton gradient. The protein is NADH-quinone oxidoreductase subunit C of Polaromonas sp. (strain JS666 / ATCC BAA-500).